The sequence spans 239 residues: tRNA (guanine-N(7)-)-methyltransferase (239 aa).

Positions 69, 94, 121, and 144 each coordinate S-adenosyl-L-methionine. The active site involves D144. Substrate-binding positions include K148, D180, and 217–220 (TKFE).

This sequence belongs to the class I-like SAM-binding methyltransferase superfamily. TrmB family.

The catalysed reaction is guanosine(46) in tRNA + S-adenosyl-L-methionine = N(7)-methylguanosine(46) in tRNA + S-adenosyl-L-homocysteine. The protein operates within tRNA modification; N(7)-methylguanine-tRNA biosynthesis. Functionally, catalyzes the formation of N(7)-methylguanine at position 46 (m7G46) in tRNA. The sequence is that of tRNA (guanine-N(7)-)-methyltransferase from Pseudoalteromonas atlantica (strain T6c / ATCC BAA-1087).